The sequence spans 249 residues: Putative TrmH family tRNA/rRNA methyltransferase (249 aa).

Residues glycine 196, isoleucine 216, and leucine 225 each contribute to the S-adenosyl-L-methionine site.

Belongs to the class IV-like SAM-binding methyltransferase superfamily. RNA methyltransferase TrmH family.

The polypeptide is Putative TrmH family tRNA/rRNA methyltransferase (Staphylococcus epidermidis (strain ATCC 35984 / DSM 28319 / BCRC 17069 / CCUG 31568 / BM 3577 / RP62A)).